Consider the following 197-residue polypeptide: Glycerol-3-phosphate acyltransferase (197 aa).

Transmembrane regions (helical) follow at residues 1 to 21, 78 to 98, 112 to 132, and 155 to 175; these read MNFL…FAIV, PVEA…SVFL, VLAG…LAVA, and VLLG…ILVW.

This sequence belongs to the PlsY family. In terms of assembly, probably interacts with PlsX.

The protein resides in the cell inner membrane. The enzyme catalyses an acyl phosphate + sn-glycerol 3-phosphate = a 1-acyl-sn-glycero-3-phosphate + phosphate. It functions in the pathway lipid metabolism; phospholipid metabolism. Functionally, catalyzes the transfer of an acyl group from acyl-phosphate (acyl-PO(4)) to glycerol-3-phosphate (G3P) to form lysophosphatidic acid (LPA). This enzyme utilizes acyl-phosphate as fatty acyl donor, but not acyl-CoA or acyl-ACP. The chain is Glycerol-3-phosphate acyltransferase from Aromatoleum aromaticum (strain DSM 19018 / LMG 30748 / EbN1) (Azoarcus sp. (strain EbN1)).